The following is a 313-amino-acid chain: MKKLNIIFAGTPDISAQVLKDLYKSQHNIQAVLTQPDRAKGRGKKVQFSPVKEVALANHTPVFQPLSFKKNPEVLEQIKQLKPDVIVVIAYGIIVPQEFLDIPRYGCLNIHVSLLPKWRGAAPIQRAIQAGDTKTGVCIMQMDAGLDTGDILNTLEIEIQETDTSQTLHDKFAKLSIKPLLETLEKIEIIKPEPQQGEPTYAHKITKQEGLIDFTKSAWRISCHIRAFTPWPGAYFILDDEAIKVGEFEILYQNTDNRKAGTIIDIYRSGFDIATSDKIIRFRQLQFPNKKMLNIVDILNGKDLDKYIGYKLG.

113 to 116 (SLLP) is a binding site for (6S)-5,6,7,8-tetrahydrofolate.

Belongs to the Fmt family.

The catalysed reaction is L-methionyl-tRNA(fMet) + (6R)-10-formyltetrahydrofolate = N-formyl-L-methionyl-tRNA(fMet) + (6S)-5,6,7,8-tetrahydrofolate + H(+). Its function is as follows. Attaches a formyl group to the free amino group of methionyl-tRNA(fMet). The formyl group appears to play a dual role in the initiator identity of N-formylmethionyl-tRNA by promoting its recognition by IF2 and preventing the misappropriation of this tRNA by the elongation apparatus. This is Methionyl-tRNA formyltransferase from Francisella tularensis subsp. holarctica (strain FTNF002-00 / FTA).